A 216-amino-acid polypeptide reads, in one-letter code: MRNQFICVALLLCALNSACGLYFHISETERKCFIEEVPDETTVIVNYKVELYDPRSNGFMPSSPGIGMHVEVRDSDDKVILSRVYSSQGRISFTSHTPGEHVICMYSNSTAWFSGAQLRVHLDIQVGEHAIDYANVAQKEKLTELQLRIRQLLDQVDQITKEQNYQRYREERFRHTSESTNSRVLWWSLAQTVVLVCMGFWQMRHLKSFFEAKKLV.

The signal sequence occupies residues 1-20 (MRNQFICVALLLCALNSACG). The Lumenal segment spans residues 21–183 (LYFHISETER…RHTSESTNSR (163 aa)). In terms of domain architecture, GOLD spans 30 to 126 (RKCFIEEVPD…QLRVHLDIQV (97 aa)). Residues 134 to 164 (ANVAQKEKLTELQLRIRQLLDQVDQITKEQN) adopt a coiled-coil conformation. A helical membrane pass occupies residues 184–203 (VLWWSLAQTVVLVCMGFWQM). Over 204–216 (RHLKSFFEAKKLV) the chain is Cytoplasmic. Residues 213 to 216 (KKLV) carry the Prevents secretion from ER motif.

The protein belongs to the EMP24/GP25L family.

It localises to the endoplasmic reticulum membrane. Eca and bai are essential, though not redundant, for dorsoventral patterning of the embryo. Specifically required during early embryogenesis for the activity of maternal tkv, while the zygotic tkv is not affected. Involved in Golgi organization. This chain is Transmembrane emp24 domain-containing protein eca, found in Drosophila willistoni (Fruit fly).